The following is a 452-amino-acid chain: Tripartite motif-containing protein 51 (452 aa).

The segment at C15–K56 adopts an RING-type zinc-finger fold. The B box-type zinc finger occupies S88 to I129. Zn(2+) is bound by residues C93, H96, C115, and H121. The 184-residue stretch at E269 to F452 folds into the B30.2/SPRY domain.

Belongs to the TRIM/RBCC family.

The polypeptide is Tripartite motif-containing protein 51 (TRIM51) (Homo sapiens (Human)).